The following is a 295-amino-acid chain: Deleted in azoospermia-like (295 aa).

A compositionally biased stretch (polar residues) spans 1-10; that stretch reads MSTANPETPN. The tract at residues 1–25 is disordered; the sequence is MSTANPETPNSTISREASTQSSSAA. Low complexity predominate over residues 11–25; it reads STISREASTQSSSAA. The RRM domain maps to 40–115; it reads NTVFVGGIDV…KKLKLGPAIR (76 aa). The homodimerization stretch occupies residues 80 to 132; sequence KGYGFVSFFNDVDVQKIVESQINFHGKKLKLGPAIRKQNLCAYHVQPRPLVFN. Residues 167 to 190 form the DAZ domain; it reads AYPTYPNSPVQVITGYQLPVYNYQ. The residue at position 276 (tyrosine 276) is a Phosphotyrosine.

Belongs to the RRM DAZ family. As to quaternary structure, homodimer and heterodimer. Multiple DAZL RRMs can bind to a single RNA containing multiple GUU triplets. Forms a heterodimer with DAZ. Interacts with BOLL, DAZAP1 and DAZAP2. Interacts with PUM2. In terms of tissue distribution, testis specific.

It localises to the cytoplasm. The protein resides in the nucleus. In terms of biological role, RNA-binding protein, which is essential for gametogenesis in both males and females. Plays a central role during spermatogenesis. Acts by binding to the 3'-UTR of mRNA, specifically recognizing GUU triplets, and thereby regulating the translation of key transcripts. In Homo sapiens (Human), this protein is Deleted in azoospermia-like (DAZL).